An 80-amino-acid chain; its full sequence is MAFLKKSLFLVLFLGIVSLSICEEEKREGEEEEKQEEENEELSEEELRERRAWLDKLKSLGKVVGKVALGVAQNYLNPQQ.

The N-terminal stretch at 1 to 22 (MAFLKKSLFLVLFLGIVSLSIC) is a signal peptide. The propeptide occupies 23-49 (EEEKREGEEEEKQEEENEELSEEELRE).

It belongs to the frog skin active peptide (FSAP) family. Dermaseptin subfamily. Expressed by the skin glands.

The protein resides in the secreted. Its function is as follows. Has antibacterial activity against the Gram-negative bacteria E.coli ATCC 25922 (MIC=5 uM), P.aeruginosa ATCC 27853 (MIC=10 uM) and X.citri (MIC&lt; 2 uM), and the Gram-positive bacterium S.aureus ATCC 29313 (MIC=20 uM). Does not have hemolytic activity against human erythrocytes. This is Raniseptin-1 from Boana raniceps (Chaco tree frog).